We begin with the raw amino-acid sequence, 472 residues long: Argininosuccinate lyase (472 aa).

Belongs to the lyase 1 family. Argininosuccinate lyase subfamily.

Its subcellular location is the cytoplasm. The enzyme catalyses 2-(N(omega)-L-arginino)succinate = fumarate + L-arginine. Its pathway is amino-acid biosynthesis; L-arginine biosynthesis; L-arginine from L-ornithine and carbamoyl phosphate: step 3/3. This Rhodococcus opacus (strain B4) protein is Argininosuccinate lyase.